The primary structure comprises 436 residues: GTPase Der (436 aa).

EngA-type G domains are found at residues 4-167 (PTIA…PEQQ) and 176-351 (IKFS…ENHR). GTP is bound by residues 10–17 (GRANVGKS), 57–61 (DTGGI), 119–122 (NKID), 182–189 (GRPNVGKS), 229–233 (DTAGM), and 294–297 (NKWD). The region spanning 352–436 (KRVQSSTLNE…PLHLIARKRN (85 aa)) is the KH-like domain.

The protein belongs to the TRAFAC class TrmE-Era-EngA-EngB-Septin-like GTPase superfamily. EngA (Der) GTPase family. Associates with the 50S ribosomal subunit.

Its function is as follows. GTPase that plays an essential role in the late steps of ribosome biogenesis. In Macrococcus caseolyticus (strain JCSC5402) (Macrococcoides caseolyticum), this protein is GTPase Der.